The primary structure comprises 871 residues: MYSACAVALRAGARRVVRRVPKSARALPRAAAARRQISTTAARSTDLTTRGMIVQTLSSVGSKREVQQYLSLFTSVSSQRFAVIKVGGAILTDYLDELCAALKFLYTVGLYPVIVHGAGPQLNRLLEDAGVEPQFEEGIRVTDAKTLRVARDLFLQENLKLVNKLEEMGVHAQPLTTGMFRADYLNKEKWGLVGKVTGVNKQAIETAISNGYLPILTSMAETDDGQILNVNADVAAAELARALEPLKVVYLSEKGGLFDAGGQKISAINLDEEYEHLMSQAWVKYGTRLKIKEIKELLDTLPRTTSVAIIHPEELQKELFTDSGAGTLIRRGSKLQASTSLSEFKDLEALKSVLIRDREGPDAKETVEKYLDFLKENPFKAYFDSSMNALAIVLPASEGRQATLATLTITKSGWLTNIADNIFTALKKEHPSLVWTVKEDDENLGWFFDKADGSITRQGDVMFWYGIENGDEIVKLMKDFTENGRAMLGNSNLESRLRQAASKPAAQQVRGYSTLARRPALPKFSISNRRGYLTQTNPNPPVGKQNASMDRPARVALIGARGYTGQELIRLIDSHPNMELHHVSSRELAGKKLEGYNKQEVIYENLSPEDVRDMEKRGEIDCWVMALPNGVCKPFVEAVWEGRKASGHKSVIIDLSADYRFDNKWTYGLPELVQRSNIIQATQIANPGCYATAAQLGISPLVPHLGGMPHVFGVSGYSGAGTKPSPKNDVENLTNNIIPYSLTGHIHEREVSSQLGAEIAFMPHVAVWFRGIHHTISIPLNKSMTSRDIRQLYQDRYAGEKLVKVVGEAPSVKNIGGKHGVEIGGFEVDKSGRRVVICATIDNLLKGAATQCLQNMNLALGYAEYEGIPTM.

The N-terminal 44 residues, 1–44, are a transit peptide targeting the mitochondrion; the sequence is MYSACAVALRAGARRVVRRVPKSARALPRAAAARRQISTTAARS. The 153-residue stretch at 336–488 folds into the N-acetyltransferase domain; it reads QASTSLSEFK…DFTENGRAML (153 aa). C689 is a catalytic residue.

It in the N-terminal section; belongs to the acetylglutamate kinase family. This sequence in the C-terminal section; belongs to the NAGSA dehydrogenase family. The protein precursor is cleaved into the two biologically active enzymes, the kinase and the reductase.

It localises to the mitochondrion. The catalysed reaction is N-acetyl-L-glutamate 5-semialdehyde + phosphate + NADP(+) = N-acetyl-L-glutamyl 5-phosphate + NADPH + H(+). It carries out the reaction N-acetyl-L-glutamate + ATP = N-acetyl-L-glutamyl 5-phosphate + ADP. It participates in amino-acid biosynthesis; L-arginine biosynthesis; N(2)-acetyl-L-ornithine from L-glutamate: step 2/4. It functions in the pathway amino-acid biosynthesis; L-arginine biosynthesis; N(2)-acetyl-L-ornithine from L-glutamate: step 3/4. This chain is Protein arg-6, mitochondrial (arg-6), found in Neurospora crassa (strain ATCC 24698 / 74-OR23-1A / CBS 708.71 / DSM 1257 / FGSC 987).